A 118-amino-acid chain; its full sequence is MRVKRAVHAKKKRKKYLKAAKGYRGALSRRYKLAKQMYVRSKWYSYVGRKLKKRDMRKLWITRINIAARNEGLKYSEFIHGLKLAGVSINRKMLSELAVNDPEAFREYVKIAKEALAS.

The protein belongs to the bacterial ribosomal protein bL20 family.

Its function is as follows. Binds directly to 23S ribosomal RNA and is necessary for the in vitro assembly process of the 50S ribosomal subunit. It is not involved in the protein synthesizing functions of that subunit. The protein is Large ribosomal subunit protein bL20 of Thermotoga petrophila (strain ATCC BAA-488 / DSM 13995 / JCM 10881 / RKU-1).